The primary structure comprises 525 residues: ATP synthase subunit alpha (525 aa).

Gly169–Thr176 lines the ATP pocket.

Belongs to the ATPase alpha/beta chains family. In terms of assembly, F-type ATPases have 2 components, CF(1) - the catalytic core - and CF(0) - the membrane proton channel. CF(1) has five subunits: alpha(3), beta(3), gamma(1), delta(1), epsilon(1). CF(0) has three main subunits: a(1), b(2) and c(9-12). The alpha and beta chains form an alternating ring which encloses part of the gamma chain. CF(1) is attached to CF(0) by a central stalk formed by the gamma and epsilon chains, while a peripheral stalk is formed by the delta and b chains.

The protein resides in the cell membrane. It carries out the reaction ATP + H2O + 4 H(+)(in) = ADP + phosphate + 5 H(+)(out). In terms of biological role, produces ATP from ADP in the presence of a proton gradient across the membrane. The alpha chain is a regulatory subunit. This Mycoplasma capricolum subsp. capricolum (strain California kid / ATCC 27343 / NCTC 10154) protein is ATP synthase subunit alpha.